The chain runs to 649 residues: Putative cystathionine gamma-synthase YML082W (649 aa).

The segment at 242 to 273 is disordered; that stretch reads NEANHGEDHDGGISGEVDSQEEPHNGLVSTIP. Ser-287 is subject to Phosphoserine. Lys-451 carries the N6-(pyridoxal phosphate)lysine modification.

It belongs to the trans-sulfuration enzymes family. MET7 subfamily. Pyridoxal 5'-phosphate is required as a cofactor.

The catalysed reaction is O-succinyl-L-homoserine + L-cysteine = L,L-cystathionine + succinate + H(+). It functions in the pathway amino-acid biosynthesis; L-methionine biosynthesis via de novo pathway; L-cystathionine from O-succinyl-L-homoserine: step 1/1. Its function is as follows. Catalyzes the formation of L-cystathionine from O-succinyl-L-homoserine (OSHS) and L-cysteine, via a gamma-replacement reaction. In the absence of thiol, catalyzes gamma-elimination to form 2-oxobutanoate, succinate and ammonia. The protein is Putative cystathionine gamma-synthase YML082W of Saccharomyces cerevisiae (strain ATCC 204508 / S288c) (Baker's yeast).